The chain runs to 389 residues: Probable tRNA pseudouridine synthase D 1 (389 aa).

Asp63 (nucleophile) is an active-site residue. The region spanning 135-345 (GAPNYYDDQR…KYTKRPIISI (211 aa)) is the TRUD domain.

The protein belongs to the pseudouridine synthase TruD family.

It carries out the reaction uridine(13) in tRNA = pseudouridine(13) in tRNA. Its function is as follows. Could be responsible for synthesis of pseudouridine from uracil-13 in transfer RNAs. The protein is Probable tRNA pseudouridine synthase D 1 (truD1) of Methanococcus maripaludis (strain DSM 14266 / JCM 13030 / NBRC 101832 / S2 / LL).